We begin with the raw amino-acid sequence, 206 residues long: Large ribosomal subunit protein uL4 (206 aa).

The interval 47–94 (NRAQKGRSEIAKSTRKPFRQKGTGNARAGMASSPLWRGGGKIFPNSPD) is disordered.

It belongs to the universal ribosomal protein uL4 family. In terms of assembly, part of the 50S ribosomal subunit.

Its function is as follows. One of the primary rRNA binding proteins, this protein initially binds near the 5'-end of the 23S rRNA. It is important during the early stages of 50S assembly. It makes multiple contacts with different domains of the 23S rRNA in the assembled 50S subunit and ribosome. Functionally, forms part of the polypeptide exit tunnel. This is Large ribosomal subunit protein uL4 from Azoarcus sp. (strain BH72).